The chain runs to 71 residues: Small ribosomal subunit protein bS21 (71 aa).

Basic residues predominate over residues 48-59 (EKASLAKRHAKR). The disordered stretch occupies residues 48-71 (EKASLAKRHAKRNFRENARNTRLY). Over residues 60–71 (NFRENARNTRLY) the composition is skewed to basic and acidic residues.

It belongs to the bacterial ribosomal protein bS21 family.

The chain is Small ribosomal subunit protein bS21 from Glaesserella parasuis serovar 5 (strain SH0165) (Haemophilus parasuis).